A 498-amino-acid chain; its full sequence is Pyruvate kinase (498 aa).

R53 serves as a coordination point for substrate. The K(+) site is built by N55, S57, D87, and T88. 55–58 (NFSH) lines the ATP pocket. ATP contacts are provided by R94 and K178. Residue E240 participates in Mg(2+) binding. G263, D264, and T296 together coordinate substrate. D264 is a Mg(2+) binding site.

The protein belongs to the pyruvate kinase family. Homotetramer. Mg(2+) is required as a cofactor. The cofactor is K(+).

The catalysed reaction is pyruvate + ATP = phosphoenolpyruvate + ADP + H(+). The protein operates within carbohydrate degradation; glycolysis; pyruvate from D-glyceraldehyde 3-phosphate: step 5/5. This Trypanoplasma borreli protein is Pyruvate kinase (PYK).